The primary structure comprises 471 residues: Cysteine--tRNA ligase (471 aa).

Cys-29 contributes to the Zn(2+) binding site. The 'HIGH' region motif lies at 31–41; it reads PTVYDYFHIGN. The Zn(2+) site is built by Cys-212, His-237, and Glu-241. The 'KMSKS' region motif lies at 269 to 273; that stretch reads KMSKS. Lys-272 provides a ligand contact to ATP.

It belongs to the class-I aminoacyl-tRNA synthetase family. As to quaternary structure, monomer. It depends on Zn(2+) as a cofactor.

It localises to the cytoplasm. The catalysed reaction is tRNA(Cys) + L-cysteine + ATP = L-cysteinyl-tRNA(Cys) + AMP + diphosphate. The protein is Cysteine--tRNA ligase of Symbiobacterium thermophilum (strain DSM 24528 / JCM 14929 / IAM 14863 / T).